The following is a 451-amino-acid chain: PTS system galactose-specific EIIC component (451 aa).

The region spanning 8-427 (LNKTLMPLAS…VLNVLIYYPF (420 aa)) is the PTS EIIC type-3 domain. The next 11 membrane-spanning stretches (helical) occupy residues 40-60 (LGIA…VDFL), 69-89 (FSAV…YNFA), 104-124 (GLLS…VPVV), 151-171 (TGST…LVYI), 190-210 (VVDS…MFGI), 239-259 (ANPW…FFGI), 263-283 (LIGG…IDAY), 296-316 (IVFA…GLVI), 332-352 (LGAI…LPMM), 356-376 (LFFI…LGLA), and 403-423 (ISGG…NVLI).

It localises to the cell membrane. In terms of biological role, the phosphoenolpyruvate-dependent sugar phosphotransferase system (PTS), a major carbohydrate active transport system, catalyzes the phosphorylation of incoming sugar substrates concomitant with their translocation across the cell membrane. Involved in galactose transport with PtcA and PtcB. The protein is PTS system galactose-specific EIIC component of Lactococcus lactis subsp. cremoris (strain MG1363).